The chain runs to 198 residues: Myb-related protein 340 (198 aa).

HTH myb-type domains follow at residues 10-62 (DVEV…LNYL) and 63-117 (RPDV…IQKH). 2 DNA-binding regions (H-T-H motif) span residues 38 to 62 (WNTIARSAGLKRTGKSCRLRWLNYL) and 90 to 113 (WSKIAKHLPGRTDNEIKNYWNRTR).

Expressed only in flowers.

It localises to the nucleus. In terms of biological role, transcription factor. The protein is Myb-related protein 340 of Antirrhinum majus (Garden snapdragon).